A 487-amino-acid polypeptide reads, in one-letter code: Serine/threonine-protein kinase 4 (487 aa).

Met1 bears the N-acetylmethionine mark. Thr3 bears the Phosphothreonine mark. In terms of domain architecture, Protein kinase spans 30–281 (FDVLEKLGEG…ATQLLQHPFV (252 aa)). ATP-binding positions include 36–44 (LGEGSYGSV) and Lys59. Asp149 serves as the catalytic Proton acceptor. Thr183 bears the Phosphothreonine; by autocatalysis mark. A Phosphoserine modification is found at Ser265. Residues 290–310 (LRDLINEAMDVKLKRQESQQR) are a coiled coil. A compositionally biased stretch (basic and acidic residues) spans 303-312 (KRQESQQREV). Residues 303–332 (KRQESQQREVDQDDEENSEEDEMDSGTMVR) are disordered. Positions 313 to 326 (DQDDEENSEEDEMD) are enriched in acidic residues. Phosphoserine is present on Ser320. 2 positions are modified to phosphothreonine: Thr340 and Thr367. Thr387 carries the phosphothreonine; by PKB/AKT1 modification. Phosphoserine occurs at positions 410 and 414. At Tyr433 the chain carries Phosphotyrosine. One can recognise an SARAH domain in the interval 433–480 (YEFLKSWTVEDLQKRLLALDPMMEQEIEEIRQKYQSKRQPILDAIEAK).

It belongs to the protein kinase superfamily. STE Ser/Thr protein kinase family. STE20 subfamily. Homodimer; mediated via the coiled-coil region. Interacts with NORE1, which inhibits autoactivation. Interacts with and stabilizes SAV1. Interacts with RASSF1. Interacts with FOXO3. Interacts with RASSF2 (via SARAH domain). Interacts with AR, PKB/AKT1, TNNI3 and SIRT1. Interacts with DLG5 (via PDZ domain 3). Interacts with MARK3 and SCRIB in the presence of DLG5. Mg(2+) is required as a cofactor. In terms of processing, autophosphorylated on serine and threonine residues. Phosphorylation at Thr-387 by PKB/AKT1, leads to inhibition of its: kinase activity, nuclear translocation and autophosphorylation at Thr-183. It also diminishes its cleavage by caspases and its ability to phosphorylate FOXO3. Post-translationally, proteolytically cleaved by caspase-3 during apoptosis at Asp-326 and Asp-349 resulting in a 37 kDa or a 39 kDa subunit respectively. The 39 kDa subunit is further cleaved into the 37 kDa form. Proteolytic cleavage results in kinase activation and nuclear translocation of the truncated form (MST1/N). It is less likely that cleavage at Asp-349 is a prerequisite for activation as this site is not conserved in the murine ortholog.

Its subcellular location is the cytoplasm. The protein localises to the nucleus. It carries out the reaction L-seryl-[protein] + ATP = O-phospho-L-seryl-[protein] + ADP + H(+). The catalysed reaction is L-threonyl-[protein] + ATP = O-phospho-L-threonyl-[protein] + ADP + H(+). Inhibited by the C-terminal non-catalytic region. Activated by caspase-cleavage. Full activation also requires homodimerization and autophosphorylation of Thr-183. Activated by RASSF1 which acts by preventing its dephosphorylation. In terms of biological role, stress-activated, pro-apoptotic kinase which, following caspase-cleavage, enters the nucleus and induces chromatin condensation followed by internucleosomal DNA fragmentation. Key component of the Hippo signaling pathway which plays a pivotal role in organ size control and tumor suppression by restricting proliferation and promoting apoptosis. The core of this pathway is composed of a kinase cascade wherein STK3/MST2 and STK4/MST1, in complex with its regulatory protein SAV1, phosphorylates and activates LATS1/2 in complex with its regulatory protein MOB1, which in turn phosphorylates and inactivates YAP1 oncoprotein and WWTR1/TAZ. Phosphorylation of YAP1 by LATS2 inhibits its translocation into the nucleus to regulate cellular genes important for cell proliferation, cell death, and cell migration. STK3/MST2 and STK4/MST1 are required to repress proliferation of mature hepatocytes, to prevent activation of facultative adult liver stem cells (oval cells), and to inhibit tumor formation. Phosphorylates 'Ser-14' of histone H2B (H2BS14ph) during apoptosis. Phosphorylates FOXO3 upon oxidative stress, which results in its nuclear translocation and cell death initiation. Phosphorylates MOBKL1A, MOBKL1B and RASSF2. Phosphorylates TNNI3 (cardiac Tn-I) and alters its binding affinity to TNNC1 (cardiac Tn-C) and TNNT2 (cardiac Tn-T). Phosphorylates FOXO1 on 'Ser-212' and regulates its activation and stimulates transcription of PMAIP1 in a FOXO1-dependent manner. Phosphorylates SIRT1 and inhibits SIRT1-mediated p53/TP53 deacetylation, thereby promoting p53/TP53 dependent transcription and apoptosis upon DNA damage. Acts as an inhibitor of PKB/AKT1. Phosphorylates AR on 'Ser-650' and suppresses its activity by intersecting with PKB/AKT1 signaling and antagonizing formation of AR-chromatin complexes. This chain is Serine/threonine-protein kinase 4 (STK4), found in Chlorocebus aethiops (Green monkey).